The primary structure comprises 1028 residues: Beta-galactosidase (1028 aa).

Substrate is bound by residues Asn104 and Asp203. Asp203 is a Na(+) binding site. Mg(2+) is bound by residues Glu418, His420, and Glu463. Residues Glu463 and 539–542 (EYAH) contribute to the substrate site. Glu463 serves as the catalytic Proton donor. Glu539 acts as the Nucleophile in catalysis. Asn599 lines the Mg(2+) pocket. Na(+)-binding residues include Phe603 and Asn606. Positions 606 and 1003 each coordinate substrate.

Belongs to the glycosyl hydrolase 2 family. In terms of assembly, homotetramer. It depends on Mg(2+) as a cofactor. Na(+) is required as a cofactor.

It carries out the reaction Hydrolysis of terminal non-reducing beta-D-galactose residues in beta-D-galactosides.. The chain is Beta-galactosidase from Enterobacter cloacae.